The following is a 170-amino-acid chain: Ribosome maturation factor RimM (170 aa).

The PRC barrel domain maps to 98-170; it reads PDEYYWVDLE…RIVVDWDPEF (73 aa).

The protein belongs to the RimM family. Binds ribosomal protein uS19.

The protein localises to the cytoplasm. Its function is as follows. An accessory protein needed during the final step in the assembly of 30S ribosomal subunit, possibly for assembly of the head region. Essential for efficient processing of 16S rRNA. May be needed both before and after RbfA during the maturation of 16S rRNA. It has affinity for free ribosomal 30S subunits but not for 70S ribosomes. The polypeptide is Ribosome maturation factor RimM (Xylella fastidiosa (strain 9a5c)).